The sequence spans 118 residues: Large ribosomal subunit protein bL20 (118 aa).

It belongs to the bacterial ribosomal protein bL20 family.

Functionally, binds directly to 23S ribosomal RNA and is necessary for the in vitro assembly process of the 50S ribosomal subunit. It is not involved in the protein synthesizing functions of that subunit. The polypeptide is Large ribosomal subunit protein bL20 (Pseudomonas aeruginosa (strain LESB58)).